The sequence spans 67 residues: Neurotoxin Os3 (67 aa).

The region spanning 3–67 is the LCN-type CS-alpha/beta domain; sequence RDGYIAQPHN…GVIVDGEKCH (65 aa). 4 cysteine pairs are disulfide-bonded: Cys13–Cys66, Cys17–Cys39, Cys24–Cys48, and Cys28–Cys50.

The protein belongs to the long (4 C-C) scorpion toxin superfamily. Sodium channel inhibitor family. Alpha subfamily. As to expression, expressed by the venom gland.

Its subcellular location is the secreted. Binds to sodium channels (Nav) and inhibits the inactivation of the activated channels, thereby blocking neuronal transmission. In Orthochirus scrobiculosus (Central Asian scorpion), this protein is Neurotoxin Os3.